The primary structure comprises 574 residues: MRDGTPRANRLWGRLLVEELLRCGVGLFCVAPGSRSTPLVAAIAEHPRARALVHYDERGTAFAALGYARATGRPAAWVTTSGTAVANGLPAVAEAATDCVPMLLLTADRPPELRHTGANQTIEQPGIFGGYARWSFDVPPPGPDQDPATVLTTVDQAVYRSQRPPAGPVHLNLMFREPFLPQPAQPDGLPDLWPGDGPYTRYARAAPVPDEAEVRELASALGAAERGVVVAGRLRSRKQGEAAARLAAALGWPLLPDICSQARLGARPEVSAPYHDLLLAGGRFPGGRAPDAVVRVGGVPVSKRLQRYVTGRKPATYAVVADHPFRSDPEHLATHRLEADVAELCAALAGRVRRAAAPGWLSGWLRASGEAGRRLEAALRERKGLSEPGVARLVSRLIPEDHALVAASSMPVRDLDTFADPEGPPVPVAANRGASGIDGTVATAAGFARGAGRPVTLLIGDLALLHDLNSLAMLRGLPAVVVVLNNDGGGIFHFLPVAEHGGIFEPYFGTPHGLGFRQAAEMFGLGYSGPRTAGELSLAYQRACAEGGPHLIEVVTDRRENLALHRELLRGAAG.

It belongs to the TPP enzyme family. MenD subfamily. In terms of assembly, homodimer. Requires Mg(2+) as cofactor. It depends on Mn(2+) as a cofactor. Thiamine diphosphate is required as a cofactor.

The catalysed reaction is isochorismate + 2-oxoglutarate + H(+) = 5-enolpyruvoyl-6-hydroxy-2-succinyl-cyclohex-3-ene-1-carboxylate + CO2. The protein operates within quinol/quinone metabolism; 1,4-dihydroxy-2-naphthoate biosynthesis; 1,4-dihydroxy-2-naphthoate from chorismate: step 2/7. It functions in the pathway quinol/quinone metabolism; menaquinone biosynthesis. Functionally, catalyzes the thiamine diphosphate-dependent decarboxylation of 2-oxoglutarate and the subsequent addition of the resulting succinic semialdehyde-thiamine pyrophosphate anion to isochorismate to yield 2-succinyl-5-enolpyruvyl-6-hydroxy-3-cyclohexene-1-carboxylate (SEPHCHC). In Rubrobacter xylanophilus (strain DSM 9941 / JCM 11954 / NBRC 16129 / PRD-1), this protein is 2-succinyl-5-enolpyruvyl-6-hydroxy-3-cyclohexene-1-carboxylate synthase.